A 497-amino-acid chain; its full sequence is Bifunctional protein GlmU (497 aa).

A pyrophosphorylase region spans residues 1-243 (MTSSTTSSTD…SALVAGVNDR (243 aa)). Residues 16-19 (LAAG), Lys-30, Gln-87, and 92-93 (GT) each bind UDP-N-acetyl-alpha-D-glucosamine. Residue Asp-118 participates in Mg(2+) binding. Residues Gly-153, Glu-168, Asn-183, and Asn-241 each coordinate UDP-N-acetyl-alpha-D-glucosamine. Asn-241 contacts Mg(2+). A linker region spans residues 244 to 264 (VQLAALGAELNRRIVTAHQRA). Positions 265 to 497 (GVTVIDPGST…LGHHDDSQGS (233 aa)) are N-acetyltransferase. UDP-N-acetyl-alpha-D-glucosamine contacts are provided by Arg-346 and Lys-364. His-376 serves as the catalytic Proton acceptor. UDP-N-acetyl-alpha-D-glucosamine is bound by residues Tyr-379 and Asn-390. Residues Ala-393, 399–400 (NY), Ser-418, and Ala-436 contribute to the acetyl-CoA site. The tract at residues 473–497 (ARAAERASGEAAEQALGHHDDSQGS) is disordered. The span at 488–497 (LGHHDDSQGS) shows a compositional bias: basic and acidic residues.

It in the N-terminal section; belongs to the N-acetylglucosamine-1-phosphate uridyltransferase family. In the C-terminal section; belongs to the transferase hexapeptide repeat family. As to quaternary structure, homotrimer. The cofactor is Mg(2+).

The protein localises to the cytoplasm. The catalysed reaction is alpha-D-glucosamine 1-phosphate + acetyl-CoA = N-acetyl-alpha-D-glucosamine 1-phosphate + CoA + H(+). The enzyme catalyses N-acetyl-alpha-D-glucosamine 1-phosphate + UTP + H(+) = UDP-N-acetyl-alpha-D-glucosamine + diphosphate. It functions in the pathway nucleotide-sugar biosynthesis; UDP-N-acetyl-alpha-D-glucosamine biosynthesis; N-acetyl-alpha-D-glucosamine 1-phosphate from alpha-D-glucosamine 6-phosphate (route II): step 2/2. Its pathway is nucleotide-sugar biosynthesis; UDP-N-acetyl-alpha-D-glucosamine biosynthesis; UDP-N-acetyl-alpha-D-glucosamine from N-acetyl-alpha-D-glucosamine 1-phosphate: step 1/1. It participates in bacterial outer membrane biogenesis; LPS lipid A biosynthesis. In terms of biological role, catalyzes the last two sequential reactions in the de novo biosynthetic pathway for UDP-N-acetylglucosamine (UDP-GlcNAc). The C-terminal domain catalyzes the transfer of acetyl group from acetyl coenzyme A to glucosamine-1-phosphate (GlcN-1-P) to produce N-acetylglucosamine-1-phosphate (GlcNAc-1-P), which is converted into UDP-GlcNAc by the transfer of uridine 5-monophosphate (from uridine 5-triphosphate), a reaction catalyzed by the N-terminal domain. The sequence is that of Bifunctional protein GlmU from Mycobacterium sp. (strain JLS).